Reading from the N-terminus, the 316-residue chain is Acetaldehyde dehydrogenase (316 aa).

Serine 11–isoleucine 14 is a binding site for NAD(+). Cysteine 131 serves as the catalytic Acyl-thioester intermediate. Residues serine 162–asparagine 170 and asparagine 289 contribute to the NAD(+) site.

The protein belongs to the acetaldehyde dehydrogenase family. As to quaternary structure, interacts with MhpE.

The catalysed reaction is acetaldehyde + NAD(+) + CoA = acetyl-CoA + NADH + H(+). It functions in the pathway aromatic compound metabolism; 3-phenylpropanoate degradation. Its function is as follows. Catalyzes the conversion of acetaldehyde to acetyl-CoA, using NAD(+) and coenzyme A. Is the final enzyme in the meta-cleavage pathway for the degradation of aromatic compounds. This is Acetaldehyde dehydrogenase from Escherichia coli O81 (strain ED1a).